A 170-amino-acid polypeptide reads, in one-letter code: NAD(P)H-quinone oxidoreductase subunit I, chloroplastic (170 aa).

2 4Fe-4S ferredoxin-type domains span residues 55–84 (GRIHFEFDKCIACEVCVRACPIDLPVVDWK) and 95–124 (LNYSIDFGICIFCGNCVEYCPTNCLSMTEE). Cysteine 64, cysteine 67, cysteine 70, cysteine 74, cysteine 104, cysteine 107, cysteine 110, and cysteine 114 together coordinate [4Fe-4S] cluster.

Belongs to the complex I 23 kDa subunit family. NDH is composed of at least 16 different subunits, 5 of which are encoded in the nucleus. The cofactor is [4Fe-4S] cluster.

The protein resides in the plastid. Its subcellular location is the chloroplast thylakoid membrane. The catalysed reaction is a plastoquinone + NADH + (n+1) H(+)(in) = a plastoquinol + NAD(+) + n H(+)(out). The enzyme catalyses a plastoquinone + NADPH + (n+1) H(+)(in) = a plastoquinol + NADP(+) + n H(+)(out). In terms of biological role, NDH shuttles electrons from NAD(P)H:plastoquinone, via FMN and iron-sulfur (Fe-S) centers, to quinones in the photosynthetic chain and possibly in a chloroplast respiratory chain. The immediate electron acceptor for the enzyme in this species is believed to be plastoquinone. Couples the redox reaction to proton translocation, and thus conserves the redox energy in a proton gradient. The sequence is that of NAD(P)H-quinone oxidoreductase subunit I, chloroplastic from Spinacia oleracea (Spinach).